Here is a 312-residue protein sequence, read N- to C-terminus: Coiled-coil domain-containing protein 160 homolog (312 aa).

Residues 126-281 (SEGAKFKNQL…EERKREKTHS (156 aa)) are a coiled coil.

The protein belongs to the CCDC160 family.

In Xenopus tropicalis (Western clawed frog), this protein is Coiled-coil domain-containing protein 160 homolog.